A 608-amino-acid polypeptide reads, in one-letter code: Probable cytosolic Fe-S cluster assembly factor SPAC806.02c (608 aa).

Residue 13–20 participates in ATP binding; that stretch reads GKGGVGKS. [4Fe-4S] cluster-binding residues include cysteine 201 and cysteine 204. WD repeat units lie at residues 288–327, 331–371, 376–415, 421–460, 465–504, 529–567, and 576–608; these read GHTGRLWSVAAHPMLPLFATSSQDKSVRIYNSNTYNLVHV, FHTR…WECT, GHENEVKCIAWSCNGNYLATCSRDKSVWIWEATEDDEFDC, EHTQDVKVVTWHPTEDLLVSGSYDNSICFWRDDGDDWALT, GHTNTVWALAFSPNGNTLASADNDGNVFLWIKISSNEDVA, IHKGAVYTISWMNDATLCSAGGDGKIVVYQREKHDEALW, and AHGVYEINSLEYLRDDRLLSGGDDGECRVWSFK.

This sequence in the N-terminal section; belongs to the Mrp/NBP35 ATP-binding proteins family. NUBP2/CFD1 subfamily. It in the C-terminal section; belongs to the WD repeat CIA1 family. In terms of assembly, heterotetramer of 2 nbp35 and 2 SPAC806.02c chains. Requires [4Fe-4S] cluster as cofactor.

The protein localises to the cytoplasm. It localises to the nucleus. In terms of biological role, fusion protein of two essential components of the cytosolic iron-sulfur (Fe/S) protein assembly (CIA) machinery. Required for maturation of extramitochondrial Fe-S proteins. May form a heterotetramer with nubp35, functioning as a Fe-S scaffold complex, mediating the de novo assembly of an Fe-S cluster and its transfer to target apoproteins. The sequence is that of Probable cytosolic Fe-S cluster assembly factor SPAC806.02c from Schizosaccharomyces pombe (strain 972 / ATCC 24843) (Fission yeast).